The primary structure comprises 278 residues: NAD kinase (278 aa).

D56 (proton acceptor) is an active-site residue. Residues D56–G57, N132–E133, R158, D160, and T171–S176 each bind NAD(+).

This sequence belongs to the NAD kinase family. Requires a divalent metal cation as cofactor.

Its subcellular location is the cytoplasm. It carries out the reaction NAD(+) + ATP = ADP + NADP(+) + H(+). Involved in the regulation of the intracellular balance of NAD and NADP, and is a key enzyme in the biosynthesis of NADP. Catalyzes specifically the phosphorylation on 2'-hydroxyl of the adenosine moiety of NAD to yield NADP. This chain is NAD kinase, found in Streptococcus agalactiae serotype V (strain ATCC BAA-611 / 2603 V/R).